The chain runs to 472 residues: 3-isopropylmalate dehydratase large subunit (472 aa).

A disordered region spans residues 61–80 (TPDHNVPTTQKERASGVEGI). Residues Cys-353, Cys-414, and Cys-417 each contribute to the [4Fe-4S] cluster site.

This sequence belongs to the aconitase/IPM isomerase family. LeuC type 1 subfamily. In terms of assembly, heterodimer of LeuC and LeuD. [4Fe-4S] cluster is required as a cofactor.

It carries out the reaction (2R,3S)-3-isopropylmalate = (2S)-2-isopropylmalate. The protein operates within amino-acid biosynthesis; L-leucine biosynthesis; L-leucine from 3-methyl-2-oxobutanoate: step 2/4. Functionally, catalyzes the isomerization between 2-isopropylmalate and 3-isopropylmalate, via the formation of 2-isopropylmaleate. This chain is 3-isopropylmalate dehydratase large subunit, found in Saccharophagus degradans (strain 2-40 / ATCC 43961 / DSM 17024).